The sequence spans 381 residues: Creatine kinase M-type (381 aa).

The Phosphagen kinase N-terminal domain maps to 11–98 (KLNYSAAEEF…FDPVIEDRHG (88 aa)). The Phosphagen kinase C-terminal domain maps to 125–367 (YVLSSRVRTG…KLMVEMEKRL (243 aa)). Residues 128 to 132 (SSRVR), His191, Arg236, Arg292, 320 to 325 (RGTGGV), and Asp335 contribute to the ATP site.

The protein belongs to the ATP:guanido phosphotransferase family. Dimer of identical or non-identical chains. With MM being the major form in skeletal muscle and myocardium, MB existing in myocardium, and BB existing in many tissues, especially brain.

Its subcellular location is the cytoplasm. The enzyme catalyses creatine + ATP = N-phosphocreatine + ADP + H(+). In terms of biological role, reversibly catalyzes the transfer of phosphate between ATP and various phosphogens (e.g. creatine phosphate). Creatine kinase isoenzymes play a central role in energy transduction in tissues with large, fluctuating energy demands, such as skeletal muscle, heart, brain and spermatozoa. This is Creatine kinase M-type from Torpedo marmorata (Marbled electric ray).